Consider the following 186-residue polypeptide: Ribosome-recycling factor (186 aa).

This sequence belongs to the RRF family.

The protein resides in the cytoplasm. Functionally, responsible for the release of ribosomes from messenger RNA at the termination of protein biosynthesis. May increase the efficiency of translation by recycling ribosomes from one round of translation to another. This Rhizobium leguminosarum bv. trifolii (strain WSM2304) protein is Ribosome-recycling factor.